The primary structure comprises 116 residues: Large ribosomal subunit protein bL17 (116 aa).

Belongs to the bacterial ribosomal protein bL17 family. In terms of assembly, part of the 50S ribosomal subunit. Contacts protein L32.

The protein is Large ribosomal subunit protein bL17 of Picosynechococcus sp. (strain ATCC 27264 / PCC 7002 / PR-6) (Agmenellum quadruplicatum).